The chain runs to 765 residues: Putative maltooligosyl trehalose synthase (765 aa).

The protein belongs to the glycosyl hydrolase 13 family. Monomer.

The catalysed reaction is 4-[(1-&gt;4)-alpha-D-glucosyl](n-1)-D-glucose = 1-[(1-&gt;4)-alpha-D-glucosyl](n-1)-alpha-D-glucose. Its function is as follows. Catalyzes the conversion of maltooligosaccharide into the non-reducing saccharide, maltooligosyl trehalose (alpha-maltooligosyl alpha-D-glucoside) by intramolecular transglycosylation. The polypeptide is Putative maltooligosyl trehalose synthase (treY) (Mycobacterium tuberculosis (strain CDC 1551 / Oshkosh)).